The primary structure comprises 546 residues: CTP synthase (546 aa).

An amidoligase domain region spans residues 1 to 264; the sequence is MRYIVVTGGV…TKYIMKAMRL (264 aa). Residue serine 12 coordinates CTP. Position 12 (serine 12) interacts with UTP. ATP contacts are provided by residues 13–18 and aspartate 70; that span reads GLGKGI. 2 residues coordinate Mg(2+): aspartate 70 and glutamate 140. CTP contacts are provided by residues 147-149, 185-190, and lysine 221; these read DIE and KTKPTQ. Residues 185–190 and lysine 221 each bind UTP; that span reads KTKPTQ. In terms of domain architecture, Glutamine amidotransferase type-1 spans 298 to 534; it reads GSQCTDPMKD…VEAMKAQRLR (237 aa). Glycine 357 lines the L-glutamine pocket. Cysteine 384 serves as the catalytic Nucleophile; for glutamine hydrolysis. Residues 385 to 388, glutamate 408, and arginine 464 contribute to the L-glutamine site; that span reads FGMQ. Catalysis depends on residues histidine 507 and glutamate 509.

Belongs to the CTP synthase family. In terms of assembly, homotetramer.

It carries out the reaction UTP + L-glutamine + ATP + H2O = CTP + L-glutamate + ADP + phosphate + 2 H(+). The catalysed reaction is L-glutamine + H2O = L-glutamate + NH4(+). The enzyme catalyses UTP + NH4(+) + ATP = CTP + ADP + phosphate + 2 H(+). It participates in pyrimidine metabolism; CTP biosynthesis via de novo pathway; CTP from UDP: step 2/2. With respect to regulation, allosterically activated by GTP, when glutamine is the substrate; GTP has no effect on the reaction when ammonia is the substrate. The allosteric effector GTP functions by stabilizing the protein conformation that binds the tetrahedral intermediate(s) formed during glutamine hydrolysis. Inhibited by the product CTP, via allosteric rather than competitive inhibition. Its function is as follows. Catalyzes the ATP-dependent amination of UTP to CTP with either L-glutamine or ammonia as the source of nitrogen. Regulates intracellular CTP levels through interactions with the four ribonucleotide triphosphates. This Methanothrix thermoacetophila (strain DSM 6194 / JCM 14653 / NBRC 101360 / PT) (Methanosaeta thermophila) protein is CTP synthase.